We begin with the raw amino-acid sequence, 356 residues long: S-adenosylmethionine:tRNA ribosyltransferase-isomerase (356 aa).

Belongs to the QueA family. Monomer.

The protein resides in the cytoplasm. The catalysed reaction is 7-aminomethyl-7-carbaguanosine(34) in tRNA + S-adenosyl-L-methionine = epoxyqueuosine(34) in tRNA + adenine + L-methionine + 2 H(+). The protein operates within tRNA modification; tRNA-queuosine biosynthesis. Transfers and isomerizes the ribose moiety from AdoMet to the 7-aminomethyl group of 7-deazaguanine (preQ1-tRNA) to give epoxyqueuosine (oQ-tRNA). The polypeptide is S-adenosylmethionine:tRNA ribosyltransferase-isomerase (Ralstonia nicotianae (strain ATCC BAA-1114 / GMI1000) (Ralstonia solanacearum)).